A 352-amino-acid chain; its full sequence is MSSRKIIHIDMDAFYASVELREQPHLKGRPVVVAWEGARSVICAASYEARQFGLHSAMSVATAKRLCPQAVYVPPHFDLYRQVSAQIHAVFRRYTDLIEPLSLDEAYLDVTRNFKNIPYASEVAKEIRAAIFAETGLTASAGIAPNKFLAKIASDWRKPNGQFVLPPHKVMAFLETLPLGKIPGVGKVTLKKMQSLGMRTAGDLRRFERGELLNHFGRYGYRLYDLVRGTDERPVKAERERLQISTEITLPEDLPLEQAAGHLPHLAEDLWRQITRKNVEAQSVTLKLKTYDFRIITRTLTYSSVLPDCAALLQAAQMLIARVPPQTEDAFRLIGIGVGHLVPKNQQQDLWA.

The UmuC domain maps to I6–G186. Mg(2+) is bound by residues D10 and D104. The active site involves E105.

This sequence belongs to the DNA polymerase type-Y family. As to quaternary structure, monomer. It depends on Mg(2+) as a cofactor.

It is found in the cytoplasm. The catalysed reaction is DNA(n) + a 2'-deoxyribonucleoside 5'-triphosphate = DNA(n+1) + diphosphate. Functionally, poorly processive, error-prone DNA polymerase involved in untargeted mutagenesis. Copies undamaged DNA at stalled replication forks, which arise in vivo from mismatched or misaligned primer ends. These misaligned primers can be extended by PolIV. Exhibits no 3'-5' exonuclease (proofreading) activity. May be involved in translesional synthesis, in conjunction with the beta clamp from PolIII. This chain is DNA polymerase IV, found in Neisseria meningitidis serogroup C / serotype 2a (strain ATCC 700532 / DSM 15464 / FAM18).